A 313-amino-acid chain; its full sequence is MTQWYPASPALWQGRDDSIEAPDARRLFQTVTRSETFSPENWQQKIALMGFACDEGVKRNAGRPGAAGAPDALRKALANMASHQGHERLVDLGNWVAPTPDLEGAQQALRDAVSRCLRAGMRTLVLGGGHETAFGHGAGVLDAFAQESVGIINLDAHLDLRQTDRATSGTPFRQLAQLCDAQSRAFHYACFGVSRAANTQALWREAQWRNVTVVEDLDCHDALAQMAQFIDKVDKIYLTIDLDVLPVWEMPAVSAPAALGVPLIQVLRLIEPVCRSGKLQAADLVEFNPRFDEDGAAARVAARLGWQIAHWWR.

The Mn(2+) site is built by histidine 130, aspartate 155, histidine 157, aspartate 159, aspartate 241, and aspartate 243.

This sequence belongs to the arginase family. Mn(2+) serves as cofactor.

The enzyme catalyses N-formimidoyl-L-glutamate + H2O = formamide + L-glutamate. It functions in the pathway amino-acid degradation; L-histidine degradation into L-glutamate; L-glutamate from N-formimidoyl-L-glutamate (hydrolase route): step 1/1. Catalyzes the conversion of N-formimidoyl-L-glutamate to L-glutamate and formamide. The polypeptide is Formimidoylglutamase (Salmonella heidelberg (strain SL476)).